The chain runs to 331 residues: Myc-associated zinc finger protein (331 aa).

Disordered stretches follow at residues 46-65 (AQSP…APAA) and 108-131 (TVDT…SAPA). Residues 117 to 127 (PPAPPPPPPAV) are compositionally biased toward pro residues. 4 C2H2-type zinc fingers span residues 177–199 (YICA…EAIH), 266–288 (HACE…KLSH), 294–316 (YQCP…VRSH), and 324–331 (YNCSHCGK).

In terms of assembly, interacts with BPTF. In terms of tissue distribution, ubiquitously expressed.

Its subcellular location is the nucleus. In terms of biological role, transcriptional regulator. Acts as a transcriptional activator that binds to purine-rich GAGA sites found in the promoter of many genes including insulin I and II and islet amyloid polypeptide. This chain is Myc-associated zinc finger protein (MAZ), found in Mesocricetus auratus (Golden hamster).